A 721-amino-acid chain; its full sequence is Fatty acid oxidation complex subunit alpha (721 aa).

An enoyl-CoA hydratase/isomerase region spans residues methionine 1–alanine 190. Aspartate 297 serves as a coordination point for substrate. The interval lysine 312–glutamate 721 is 3-hydroxyacyl-CoA dehydrogenase. NAD(+) contacts are provided by residues methionine 325, aspartate 344, valine 401–glutamate 403, lysine 408, and serine 430. Catalysis depends on histidine 451, which acts as the For 3-hydroxyacyl-CoA dehydrogenase activity. Asparagine 454 lines the NAD(+) pocket. Substrate contacts are provided by asparagine 501 and tyrosine 660.

This sequence in the N-terminal section; belongs to the enoyl-CoA hydratase/isomerase family. It in the C-terminal section; belongs to the 3-hydroxyacyl-CoA dehydrogenase family. As to quaternary structure, heterotetramer of two alpha chains (FadB) and two beta chains (FadA).

It carries out the reaction a (3S)-3-hydroxyacyl-CoA + NAD(+) = a 3-oxoacyl-CoA + NADH + H(+). The enzyme catalyses a (3S)-3-hydroxyacyl-CoA = a (2E)-enoyl-CoA + H2O. It catalyses the reaction a 4-saturated-(3S)-3-hydroxyacyl-CoA = a (3E)-enoyl-CoA + H2O. The catalysed reaction is (3S)-3-hydroxybutanoyl-CoA = (3R)-3-hydroxybutanoyl-CoA. It carries out the reaction a (3Z)-enoyl-CoA = a 4-saturated (2E)-enoyl-CoA. The enzyme catalyses a (3E)-enoyl-CoA = a 4-saturated (2E)-enoyl-CoA. Its pathway is lipid metabolism; fatty acid beta-oxidation. In terms of biological role, involved in the aerobic and anaerobic degradation of long-chain fatty acids via beta-oxidation cycle. Catalyzes the formation of 3-oxoacyl-CoA from enoyl-CoA via L-3-hydroxyacyl-CoA. It can also use D-3-hydroxyacyl-CoA and cis-3-enoyl-CoA as substrate. The polypeptide is Fatty acid oxidation complex subunit alpha (Pseudomonas savastanoi pv. phaseolicola (strain 1448A / Race 6) (Pseudomonas syringae pv. phaseolicola (strain 1448A / Race 6))).